Consider the following 192-residue polypeptide: Probable nicotinate-nucleotide adenylyltransferase (192 aa).

This sequence belongs to the NadD family.

The enzyme catalyses nicotinate beta-D-ribonucleotide + ATP + H(+) = deamido-NAD(+) + diphosphate. Its pathway is cofactor biosynthesis; NAD(+) biosynthesis; deamido-NAD(+) from nicotinate D-ribonucleotide: step 1/1. Its function is as follows. Catalyzes the reversible adenylation of nicotinate mononucleotide (NaMN) to nicotinic acid adenine dinucleotide (NaAD). In Cereibacter sphaeroides (strain ATCC 17029 / ATH 2.4.9) (Rhodobacter sphaeroides), this protein is Probable nicotinate-nucleotide adenylyltransferase.